A 621-amino-acid polypeptide reads, in one-letter code: Putative acyltransferase plsB1 (621 aa).

Residues 123 to 128 (HRSYLD) carry the HXXXXD motif motif.

It belongs to the GPAT/DAPAT family.

The protein resides in the cell membrane. In Mycobacterium bovis (strain ATCC BAA-935 / AF2122/97), this protein is Putative acyltransferase plsB1 (plsB1).